Reading from the N-terminus, the 492-residue chain is Fascin-2 (492 aa).

This sequence belongs to the fascin family. In terms of tissue distribution, localized specifically in the outer and inner segments of the photoreceptor cells in the retina.

It is found in the cytoplasm. It localises to the cytoskeleton. Its subcellular location is the cell projection. The protein localises to the stereocilium. In terms of biological role, acts as an actin bundling protein. May play a pivotal role in photoreceptor cell-specific events, such as disk morphogenesis. This chain is Fascin-2 (FSCN2), found in Homo sapiens (Human).